Reading from the N-terminus, the 373-residue chain is tRNA-specific 2-thiouridylase MnmA (373 aa).

ATP-binding positions include 12–19 (GMSGGVDS) and methionine 38. Positions 98 to 100 (NPD) are interaction with target base in tRNA. Cysteine 103 serves as the catalytic Nucleophile. A disulfide bond links cysteine 103 and cysteine 200. Glycine 127 is a binding site for ATP. Residues 150–152 (KDQ) are interaction with tRNA. Catalysis depends on cysteine 200, which acts as the Cysteine persulfide intermediate. The segment at 312–313 (RY) is interaction with tRNA.

The protein belongs to the MnmA/TRMU family.

The protein resides in the cytoplasm. It carries out the reaction S-sulfanyl-L-cysteinyl-[protein] + uridine(34) in tRNA + AH2 + ATP = 2-thiouridine(34) in tRNA + L-cysteinyl-[protein] + A + AMP + diphosphate + H(+). In terms of biological role, catalyzes the 2-thiolation of uridine at the wobble position (U34) of tRNA, leading to the formation of s(2)U34. The protein is tRNA-specific 2-thiouridylase MnmA of Streptococcus pyogenes serotype M2 (strain MGAS10270).